The primary structure comprises 331 residues: Bifunctional nuclease (331 aa).

The BFN domain occupies 126-261 (CVQNNPRVLR…RIAYNNGLKV (136 aa)). The UVR domain occupies 291-326 (EAQEFDLVRNMLVAAVEERYKDAAQYRDQLFMFRAK).

Belongs to the bifunctional nuclease family.

The protein resides in the nucleus. Functionally, bifunctional nuclease with both RNase and DNase activities. Involved in basal defense response. Participates in abscisic acid-derived callose deposition following infection by a necrotrophic pathogen. This chain is Bifunctional nuclease (BBD), found in Oryza minuta.